Consider the following 134-residue polypeptide: Endoribonuclease YbeY (134 aa).

Positions 94, 98, and 104 each coordinate Zn(2+).

This sequence belongs to the endoribonuclease YbeY family. Zn(2+) is required as a cofactor.

It localises to the cytoplasm. Functionally, single strand-specific metallo-endoribonuclease involved in late-stage 70S ribosome quality control and in maturation of the 3' terminus of the 16S rRNA. The sequence is that of Endoribonuclease YbeY from Campylobacter fetus subsp. fetus (strain 82-40).